The sequence spans 201 residues: MINKAILGGTFDPIHNAHINVAYEALERFNLEEVIFIPAGNPPHKIKLKKTPAHIRYEMVKLAIEKETRFSISDFEIKSKGLSYTYRTLKHFKEKEPETNWYFITGEDCLSYLEHWKYIDEIFNICNFVIFSREGFKEKEEIIKKKKSILLKYRKEILFMDASILDISSTKIRNRIKEGKEVSFYMPDKVYKFILQNNLYK.

This sequence belongs to the NadD family.

The enzyme catalyses nicotinate beta-D-ribonucleotide + ATP + H(+) = deamido-NAD(+) + diphosphate. Its pathway is cofactor biosynthesis; NAD(+) biosynthesis; deamido-NAD(+) from nicotinate D-ribonucleotide: step 1/1. Functionally, catalyzes the reversible adenylation of nicotinate mononucleotide (NaMN) to nicotinic acid adenine dinucleotide (NaAD). The protein is Probable nicotinate-nucleotide adenylyltransferase of Clostridium botulinum (strain ATCC 19397 / Type A).